The primary structure comprises 152 residues: Regulatory protein RecX (152 aa).

Belongs to the RecX family.

It localises to the cytoplasm. Its function is as follows. Modulates RecA activity. This Haemophilus influenzae (strain PittEE) protein is Regulatory protein RecX.